Consider the following 527-residue polypeptide: MNNTEIIENASKVLEAIDAAKEEELRNLNSLVQPRAPLNAGSTPGEIINEIKHLSTRDQEGGTSSKDEEESGAGRTVAEGAATRDHKYSKSRPKKQPRSGLQSGAAGKNPTPDGEGGDTCNRELDQHSDGDGHSNTEGASSDLASIQPCQTDDAPCSSTSYLDEEDEPAVRPKTQCKQSGLIESKEDEDGMLSELHEQHKGRSKRLSALGRVNSSPIPSPRPDELLKKGIGESIVWSGRMTESLLSHGVIQCVPGSDRYQSGKSVSVADAHLNARSACWTQNKEPQCHITNSPSDTSTDNASRSELRTIEEEDYLQDDDFEQSIEDRDFDPGDWDPSDKHNDNGLLLQILKNQEEILNRLKTIGSIQESLDSIKRIQSKQGLALSTLEGLLSSVMIAIPGSGNPGSSVEINPDLKPMLGRNKNRALKEVSDELTPPNQFLQKQGMTIQQAVKPKETMFPPAIKTGESSAKGFHPKENLVSRTVINSIITARVNNPELAAKLKLAVAKAQTKEELERIHKSIIKNLKN.

Disordered stretches follow at residues 29 to 225 (NSLV…PDEL) and 285 to 319 (PQCH…QDDD). 2 stretches are compositionally biased toward basic and acidic residues: residues 49–60 (NEIKHLSTRDQE) and 120–134 (CNRE…DGHS). 2 stretches are compositionally biased toward polar residues: residues 135–161 (NTEG…STSY) and 285–301 (PQCH…TDNA). A compositionally biased stretch (acidic residues) spans 310–319 (EEEDYLQDDD). The multimerization stretch occupies residues 312-400 (EDYLQDDDFE…LSSVMIAIPG (89 aa)). The interaction with the nucleocapsid (N-RNA) stretch occupies residues 479 to 527 (VSRTVINSIITARVNNPELAAKLKLAVAKAQTKEELERIHKSIIKNLKN).

The protein belongs to the morbillivirus P protein family. Homotetramer. Interacts (via multimerization domain) with polymerase L; this interaction forms the polymerase L-P complex. Interacts (via N-terminus) with N0 (via Ncore); this interaction allows P to chaperon N0 to avoid N polymerization before encapsidation. Interacts (via C-terminus) with N-RNA template; this interaction positions the polymerase on the template for both transcription and replication.

The protein resides in the host cytoplasm. Essential cofactor of the RNA polymerase L that plays a central role in the transcription and replication by forming the polymerase complex with RNA polymerase L and recruiting L to the genomic N-RNA template for RNA synthesis. Also plays a central role in the encapsidation of nascent RNA chains by forming the encapsidation complex with the nucleocapsid protein N (N-P complex). Acts as a chaperone for newly synthesized free N protein, so-called N0, allowing encapsidation of nascent RNA chains during replication. The nucleoprotein protein N prevents excessive phosphorylation of P, which leads to down-regulation of viral transcription/ replication. Participates, together with N, in the formation of viral factories (viroplasms), which are large inclusions in the host cytoplasm where replication takes place. The polypeptide is Phosphoprotein (P/V) (Tupaia paramyxovirus (TPMV)).